The following is a 77-amino-acid chain: MAFLKKSLFLVLFLGLVPLFLCENEKREGENEKEENDDQSEEKRSLGSFMKGVGKGLATVGKIVADQFGKLLEAGQG.

A signal peptide spans 1-22 (MAFLKKSLFLVLFLGLVPLFLC). A propeptide spanning residues 23–42 (ENEKREGENEKEENDDQSEE) is cleaved from the precursor. Gln76 carries the glutamine amide modification.

The protein belongs to the frog skin active peptide (FSAP) family. Dermatoxin subfamily. Expressed by the skin glands.

Its subcellular location is the secreted. Its function is as follows. Possesses a potent antimicrobial activity against Gram-positive and Gram-negative bacteria. Probably acts by disturbing membrane functions with its amphipathic structure. The polypeptide is Dermatoxin-A1 (Agalychnis annae (Blue-sided leaf frog)).